We begin with the raw amino-acid sequence, 137 residues long: Protein CTLA-2-alpha (137 aa).

Positions 1–27 (MMVSICEQKLQHFSAVFLLILCLGMMS) are cleaved as a signal peptide. A run of 2 repeats spans residues 39 to 41 (EWK) and 42 to 44 (EWK). The segment at 39–44 (EWKEWK) is 2 X 3 AA tandem repeats of E-W-K. Residues 114-137 (APDLPEYEDLGKNSYLTPGRAQPE) form a disordered region.

This sequence to the propeptide regions of cysteine proteases.

It localises to the secreted. Functionally, not known, expressed in activated T-cell. The protein is Protein CTLA-2-alpha (Ctla2a) of Mus musculus (Mouse).